We begin with the raw amino-acid sequence, 95 residues long: Integration host factor subunit beta (95 aa).

It belongs to the bacterial histone-like protein family. As to quaternary structure, heterodimer of an alpha and a beta chain.

Functionally, this protein is one of the two subunits of integration host factor, a specific DNA-binding protein that functions in genetic recombination as well as in transcriptional and translational control. Involved in hydrogenase gene expression. The polypeptide is Integration host factor subunit beta (ihfB) (Rhodobacter capsulatus (Rhodopseudomonas capsulata)).